The sequence spans 269 residues: NAD kinase (269 aa).

Aspartate 45 serves as the catalytic Proton acceptor. NAD(+) contacts are provided by residues 45 to 46, 122 to 123, arginine 149, aspartate 151, and alanine 186; these read DG and NE.

It belongs to the NAD kinase family. Requires a divalent metal cation as cofactor.

The protein resides in the cytoplasm. It catalyses the reaction NAD(+) + ATP = ADP + NADP(+) + H(+). Its function is as follows. Involved in the regulation of the intracellular balance of NAD and NADP, and is a key enzyme in the biosynthesis of NADP. Catalyzes specifically the phosphorylation on 2'-hydroxyl of the adenosine moiety of NAD to yield NADP. The sequence is that of NAD kinase from Staphylococcus aureus (strain Mu3 / ATCC 700698).